A 422-amino-acid polypeptide reads, in one-letter code: L-threonine dehydratase biosynthetic IlvA (422 aa).

K56 carries the post-translational modification N6-(pyridoxal phosphate)lysine. Pyridoxal 5'-phosphate is bound by residues N83, 189–193, and S315; that span reads GGGGL. The region spanning 339-413 is the ACT-like domain; that stretch reads HYFILNFPQR…FDPSNIYINE (75 aa).

It belongs to the serine/threonine dehydratase family. In terms of assembly, homotetramer. Requires pyridoxal 5'-phosphate as cofactor.

It carries out the reaction L-threonine = 2-oxobutanoate + NH4(+). Its pathway is amino-acid biosynthesis; L-isoleucine biosynthesis; 2-oxobutanoate from L-threonine: step 1/1. Catalyzes the anaerobic formation of alpha-ketobutyrate and ammonia from threonine in a two-step reaction. The first step involved a dehydration of threonine and a production of enamine intermediates (aminocrotonate), which tautomerizes to its imine form (iminobutyrate). Both intermediates are unstable and short-lived. The second step is the nonenzymatic hydrolysis of the enamine/imine intermediates to form 2-ketobutyrate and free ammonia. In the low water environment of the cell, the second step is accelerated by RidA. In Staphylococcus aureus (strain MSSA476), this protein is L-threonine dehydratase biosynthetic IlvA (ilvA).